A 428-amino-acid polypeptide reads, in one-letter code: MLDIQFIREHTDIVKESQRKRGESVELVDEVLSSDTARREALKAFEEARAQQKEIGKKVASVPADEKAKLIAETKELSQTVAEYKAKADSAAEEYTTAMWRLSNIVEPEAPEGGEDDYVVVKKVGQIRDFAAEGFEPKDHLTLGAGVAGIDMRRGVKVGGSRFYFLRGQVARMQIAMLTMAVDQAEEHGFTLAITPTLVRPEVMRGTGFLNSHADEIYRLREPDDQYLVGTSEVALAGMHENEILDLGNGPLRYCGWSSCYRREAGAAGKDTSGIIRVHQFDKVEMFVYAKQEDSYKEHEHLLAMEQEMLAKVEVPYRIIDTAAGDLGSSAARKFDCEAWVPTQGRYRELTSTSNCTEYQARRLNIRERMEDGGTRPVSTLNGTLATTRWLVAIMENHQQKDGSIEIPKAMRAYMGGKEVIEPTKWEA.

An L-serine-binding site is contributed by 231–233 (TSE). ATP-binding positions include 262–264 (RRE) and Val-278. Glu-285 serves as a coordination point for L-serine. 349–352 (ELTS) is an ATP binding site. Thr-384 serves as a coordination point for L-serine.

The protein belongs to the class-II aminoacyl-tRNA synthetase family. Type-1 seryl-tRNA synthetase subfamily. As to quaternary structure, homodimer. The tRNA molecule binds across the dimer.

It is found in the cytoplasm. The catalysed reaction is tRNA(Ser) + L-serine + ATP = L-seryl-tRNA(Ser) + AMP + diphosphate + H(+). The enzyme catalyses tRNA(Sec) + L-serine + ATP = L-seryl-tRNA(Sec) + AMP + diphosphate + H(+). Its pathway is aminoacyl-tRNA biosynthesis; selenocysteinyl-tRNA(Sec) biosynthesis; L-seryl-tRNA(Sec) from L-serine and tRNA(Sec): step 1/1. Functionally, catalyzes the attachment of serine to tRNA(Ser). Is also able to aminoacylate tRNA(Sec) with serine, to form the misacylated tRNA L-seryl-tRNA(Sec), which will be further converted into selenocysteinyl-tRNA(Sec). This is Serine--tRNA ligase from Bifidobacterium longum subsp. infantis (strain ATCC 15697 / DSM 20088 / JCM 1222 / NCTC 11817 / S12).